The following is a 906-amino-acid chain: MVSLGGIARKLFGSSNDRRVKSYQPNVVAINALEEQMRALSDEALAAKTVEFRQQLADGKTLDDILVPAFAVAREASRRVLGMRPFDVQLIGGMILHSNAIAEMKTGEGKTLVGTLPVYLNALAGKGVHVVTVNDYLAQRDSATMGRLYGFLGMRTGVIVHGLSDDERRDAYACDITYATNNELGFDYLRDNMKYDRGQMVQRGHNFAIVDEVDSILVDEARTPLIISGPLDDRSDLYITIDAFIPGLTKDDYEIDEKQRSANFSEDGTEKLETMLREAGLLKGESLYDVENVAIVHHINNALKAHKLFQRDKDYIVRNDEVVIIDEFTGRMMPGRRYSDGQHQALEAKERVQIQPENQTLAQITFQNYFRMYDKLAGMTGTASTEAEEFGNIYGLDVIEVPTNLPIQRIDEDDEVYRTHEEKFKAIIAEILEAHKRDQPVLVGTTSIEKSELLAELMRKQGFTNFQVLNARYHEQEAYIVAQAGVPGAVTIATNMAGRGTDIQLGGNLEMRVERDLHEVEPGPERDAAIARIAEEIQVLKQRSIAAGGLYVIASERHESRRIDNQLRGRSGRQGDPGRSKFYLSLQDDLMRIFGSDRMDGMLQKLGLKEGEAIVHPWINKALERAQKKVEARNFDIRKNVLKYDDVLNDQRKVIFEQRVELMDATDLTETVGDMRHDVIEDLVSKHIPERAYAEQWDADGLKTAVANFFDLDLPIHDWVKEEGIAEDDIRARLTEVAEKAAAEKAERFGPEIMTYVERSIVLQTLDNLWREHIVNLDHLRSVIGFRGYAQRDPLQEYKAEAFELFQALLNNLRQAVTAQLSRVELVQQPAEPQPPAMHGSHIDATTGQDEFAPLAMINETVVSPENRDPQNPTTWGRIGRNEACPCGSGKKYKHCHGAFENNEVV.

Residues Gln-89, 107-111 (GEGKT), and Asp-502 contribute to the ATP site. The Zn(2+) site is built by Cys-885, Cys-887, Cys-896, and His-897.

It belongs to the SecA family. As to quaternary structure, monomer and homodimer. Part of the essential Sec protein translocation apparatus which comprises SecA, SecYEG and auxiliary proteins SecDF-YajC and YidC. It depends on Zn(2+) as a cofactor.

It localises to the cell inner membrane. Its subcellular location is the cytoplasm. The enzyme catalyses ATP + H2O + cellular proteinSide 1 = ADP + phosphate + cellular proteinSide 2.. Its function is as follows. Part of the Sec protein translocase complex. Interacts with the SecYEG preprotein conducting channel. Has a central role in coupling the hydrolysis of ATP to the transfer of proteins into and across the cell membrane, serving both as a receptor for the preprotein-SecB complex and as an ATP-driven molecular motor driving the stepwise translocation of polypeptide chains across the membrane. In Rhizobium rhizogenes (strain K84 / ATCC BAA-868) (Agrobacterium radiobacter), this protein is Protein translocase subunit SecA.